We begin with the raw amino-acid sequence, 594 residues long: Aspartate--tRNA(Asp/Asn) ligase (594 aa).

Position 173 (Glu173) interacts with L-aspartate. Residues 197 to 200 are aspartate; sequence QLFK. Arg219 lines the L-aspartate pocket. Residues 219 to 221 and Gln228 contribute to the ATP site; that span reads RDE. Position 451 (His451) interacts with L-aspartate. Glu485 lines the ATP pocket. Arg492 serves as a coordination point for L-aspartate. 537–540 is a binding site for ATP; the sequence is GWDR. The segment at 566 to 594 is disordered; sequence PLTDAPAPITAQQRKESGIDAQPKRVQQA.

The protein belongs to the class-II aminoacyl-tRNA synthetase family. Type 1 subfamily. In terms of assembly, homodimer.

Its subcellular location is the cytoplasm. The enzyme catalyses tRNA(Asx) + L-aspartate + ATP = L-aspartyl-tRNA(Asx) + AMP + diphosphate. In terms of biological role, aspartyl-tRNA synthetase with relaxed tRNA specificity since it is able to aspartylate not only its cognate tRNA(Asp) but also tRNA(Asn). Reaction proceeds in two steps: L-aspartate is first activated by ATP to form Asp-AMP and then transferred to the acceptor end of tRNA(Asp/Asn). The chain is Aspartate--tRNA(Asp/Asn) ligase from Mycobacterium tuberculosis (strain CDC 1551 / Oshkosh).